Consider the following 480-residue polypeptide: 11S globulin subunit beta (480 aa).

Positions 1–21 (MARSSLFTFLCLAVFINGCLS) are cleaved as a signal peptide. Gln-22 bears the Pyrrolidone carboxylic acid mark. 2 disulfides stabilise this stretch: Cys-48–Cys-81 and Cys-124–Cys-303. 2 Cupin type-1 domains span residues 51–251 (ENLR…GLVR) and 309–458 (QNIG…EEAQ). Mg(2+)-binding residues include Lys-408 and Arg-468.

The protein belongs to the 11S seed storage protein (globulins) family. Hexamer; each subunit is composed of an acidic and a basic chain derived from a single precursor and linked by a disulfide bond.

This is a seed storage protein. The protein is 11S globulin subunit beta of Cucurbita maxima (Pumpkin).